Reading from the N-terminus, the 559-residue chain is Glucose-6-phosphate isomerase (559 aa).

E363 functions as the Proton donor in the catalytic mechanism. Catalysis depends on residues H394 and K523.

Belongs to the GPI family.

It localises to the cytoplasm. It carries out the reaction alpha-D-glucose 6-phosphate = beta-D-fructose 6-phosphate. It functions in the pathway carbohydrate biosynthesis; gluconeogenesis. The protein operates within carbohydrate degradation; glycolysis; D-glyceraldehyde 3-phosphate and glycerone phosphate from D-glucose: step 2/4. Functionally, catalyzes the reversible isomerization of glucose-6-phosphate to fructose-6-phosphate. In Bartonella quintana (strain Toulouse) (Rochalimaea quintana), this protein is Glucose-6-phosphate isomerase.